A 284-amino-acid chain; its full sequence is UPF0354 protein SERP1303 (284 aa).

This sequence belongs to the UPF0354 family.

This Staphylococcus epidermidis (strain ATCC 35984 / DSM 28319 / BCRC 17069 / CCUG 31568 / BM 3577 / RP62A) protein is UPF0354 protein SERP1303.